A 495-amino-acid chain; its full sequence is Alpha,alpha-trehalose-phosphate synthase [UDP-forming] 56 kDa subunit (495 aa).

Residues tyrosine 102 and aspartate 156 each coordinate D-glucose 6-phosphate. UDP-binding residues include arginine 293 and lysine 298. 2 residues coordinate UDP-alpha-D-glucose: arginine 293 and lysine 298. Arginine 331 contributes to the D-glucose 6-phosphate binding site. Residues isoleucine 370 and 396-400 (LVSYE) contribute to the UDP site. UDP-alpha-D-glucose is bound by residues isoleucine 370 and 392 to 400 (DGMNLVSYE).

Belongs to the glycosyltransferase 20 family. In terms of assembly, the trehalose synthase complex is composed of the two catalytic subunits TPS1 and TPS2 and at least one of the two regulatory subunits TPS3 or TSL1.

The protein localises to the cytoplasm. It carries out the reaction D-glucose 6-phosphate + UDP-alpha-D-glucose = alpha,alpha-trehalose 6-phosphate + UDP + H(+). Its pathway is carbohydrate biosynthesis. Activated by fructose 6-phosphate. Inorganic phosphate inhibits the synthase activity in the complex, but activates the synthase activity in the free monomeric form. Its function is as follows. Synthase catalytic subunit of the trehalose synthase complex that catalyzes the production of trehalose from glucose-6-phosphate and UDP-alpha-D-glucose in a two step process. Can function independently of the complex. The protein is Alpha,alpha-trehalose-phosphate synthase [UDP-forming] 56 kDa subunit of Saccharomyces cerevisiae (strain ATCC 204508 / S288c) (Baker's yeast).